The sequence spans 412 residues: Argininosuccinate synthase (412 aa).

ATP is bound by residues 20–28 (AYSGGLDTS) and alanine 48. L-citrulline-binding residues include tyrosine 100 and serine 105. Glycine 130 provides a ligand contact to ATP. Positions 132, 136, and 137 each coordinate L-aspartate. Asparagine 136 provides a ligand contact to L-citrulline. 5 residues coordinate L-citrulline: arginine 140, serine 189, serine 198, glutamate 274, and tyrosine 286.

It belongs to the argininosuccinate synthase family. Type 1 subfamily. In terms of assembly, homotetramer.

It is found in the cytoplasm. It carries out the reaction L-citrulline + L-aspartate + ATP = 2-(N(omega)-L-arginino)succinate + AMP + diphosphate + H(+). The protein operates within amino-acid biosynthesis; L-arginine biosynthesis; L-arginine from L-ornithine and carbamoyl phosphate: step 2/3. The protein is Argininosuccinate synthase of Shewanella pealeana (strain ATCC 700345 / ANG-SQ1).